A 229-amino-acid polypeptide reads, in one-letter code: Uracil-DNA glycosylase (229 aa).

D65 acts as the Proton acceptor in catalysis.

Belongs to the uracil-DNA glycosylase (UDG) superfamily. UNG family.

It is found in the cytoplasm. The catalysed reaction is Hydrolyzes single-stranded DNA or mismatched double-stranded DNA and polynucleotides, releasing free uracil.. Excises uracil residues from the DNA which can arise as a result of misincorporation of dUMP residues by DNA polymerase or due to deamination of cytosine. The protein is Uracil-DNA glycosylase of Limosilactobacillus reuteri (strain DSM 20016) (Lactobacillus reuteri).